A 274-amino-acid polypeptide reads, in one-letter code: Large ribosomal subunit protein uL2cz/uL2cy (274 aa).

2 disordered regions span residues 1–22 and 225–252; these read MAIHLYKTSTPSTRNGAVDSQV and PVDHPHGGGEGRAPIGRKKPVTPWGYPA.

The protein belongs to the universal ribosomal protein uL2 family. Part of the 50S ribosomal subunit.

It is found in the plastid. It localises to the chloroplast. The chain is Large ribosomal subunit protein uL2cz/uL2cy (rpl2-A) from Barbarea verna (Land cress).